The sequence spans 303 residues: Dipeptide transport system permease protein DppB (303 aa).

7 helical membrane passes run 9-29, 62-82, 93-113, 129-149, 166-186, 227-247, and 269-289; these read LGLL…MMQV, YFIY…IYTN, LPVS…LGAL, IFGF…GTLI, GTFS…MAVV, IPML…SVLI, and FPVI…FILV. The region spanning 93–290 is the ABC transmembrane type-1 domain; sequence LPVSMQLGTQ…VILMVFILVT (198 aa).

The protein belongs to the binding-protein-dependent transport system permease family. OppBC subfamily. As to quaternary structure, the complex is composed of two ATP-binding proteins (DppD and DppF), two transmembrane proteins (DppB and DppC) and a solute-binding protein (DppA).

Its subcellular location is the cell membrane. In terms of biological role, part of the ABC transporter DppABCDF involved in dipeptide transport. Responsible for the translocation of the substrate across the membrane. This chain is Dipeptide transport system permease protein DppB, found in Lactococcus lactis subsp. cremoris (strain MG1363).